We begin with the raw amino-acid sequence, 876 residues long: DNA polymerase 1 (876 aa).

This sequence belongs to the DNA polymerase type-B family.

The catalysed reaction is DNA(n) + a 2'-deoxyribonucleoside 5'-triphosphate = DNA(n+1) + diphosphate. In terms of biological role, this polymerase possesses two enzymatic activities: DNA synthesis (polymerase) and an exonucleolytic activity that degrades single-stranded DNA in the 3'- to 5'-direction. This chain is DNA polymerase 1 (dpo1), found in Sulfolobus acidocaldarius (strain ATCC 33909 / DSM 639 / JCM 8929 / NBRC 15157 / NCIMB 11770).